A 21-amino-acid chain; its full sequence is Phospholipase A2 crotoxin basic chain (21 aa).

It belongs to the phospholipase A2 family. Group II subfamily. Ca(2+) serves as cofactor. As to expression, expressed by the venom gland.

It is found in the secreted. It catalyses the reaction a 1,2-diacyl-sn-glycero-3-phosphocholine + H2O = a 1-acyl-sn-glycero-3-phosphocholine + a fatty acid + H(+). Functionally, snake venom phospholipase A2 (PLA2) that induces a conspicuous local myotoxic effect and moderate footpad edema. In vitro, it shows anticoagulant effects and is not cytotoxic on myoblast but is able to lyse myotubes. PLA2 catalyzes the calcium-dependent hydrolysis of the 2-acyl groups in 3-sn-phosphoglycerides. The polypeptide is Phospholipase A2 crotoxin basic chain (Crotalus durissus cumanensis (South American rattlesnake)).